A 424-amino-acid chain; its full sequence is 5-methylthioadenosine/S-adenosylhomocysteine deaminase (424 aa).

Positions 60 and 62 each coordinate Zn(2+). The substrate site is built by Glu89 and His181. His208 provides a ligand contact to Zn(2+). Residues Glu211 and Asp296 each contribute to the substrate site. Asp296 contacts Zn(2+).

This sequence belongs to the metallo-dependent hydrolases superfamily. MTA/SAH deaminase family. The cofactor is Zn(2+).

It carries out the reaction S-adenosyl-L-homocysteine + H2O + H(+) = S-inosyl-L-homocysteine + NH4(+). It catalyses the reaction S-methyl-5'-thioadenosine + H2O + H(+) = S-methyl-5'-thioinosine + NH4(+). In terms of biological role, catalyzes the deamination of 5-methylthioadenosine and S-adenosyl-L-homocysteine into 5-methylthioinosine and S-inosyl-L-homocysteine, respectively. Is also able to deaminate adenosine. The polypeptide is 5-methylthioadenosine/S-adenosylhomocysteine deaminase (Thermococcus kodakarensis (strain ATCC BAA-918 / JCM 12380 / KOD1) (Pyrococcus kodakaraensis (strain KOD1))).